Reading from the N-terminus, the 436-residue chain is GTPase Der (436 aa).

2 EngA-type G domains span residues 4-167 (PTIA…PEQQ) and 176-351 (IKFS…ENHR). GTP is bound by residues 10-17 (GRANVGKS), 57-61 (DTGGI), 119-122 (NKID), 182-189 (GRPNVGKS), 229-233 (DTAGM), and 294-297 (NKWD). A KH-like domain is found at 352–436 (KRVQSSTLNE…PLHLIARKRN (85 aa)).

It belongs to the TRAFAC class TrmE-Era-EngA-EngB-Septin-like GTPase superfamily. EngA (Der) GTPase family. As to quaternary structure, associates with the 50S ribosomal subunit.

Its function is as follows. GTPase that plays an essential role in the late steps of ribosome biogenesis. The chain is GTPase Der from Macrococcus caseolyticus (strain JCSC5402) (Macrococcoides caseolyticum).